Consider the following 209-residue polypeptide: Large ribosomal subunit protein uL3 (209 aa).

Gln-150 is subject to N5-methylglutamine.

The protein belongs to the universal ribosomal protein uL3 family. In terms of assembly, part of the 50S ribosomal subunit. Forms a cluster with proteins L14 and L19. Post-translationally, methylated by PrmB.

One of the primary rRNA binding proteins, it binds directly near the 3'-end of the 23S rRNA, where it nucleates assembly of the 50S subunit. The protein is Large ribosomal subunit protein uL3 of Vibrio vulnificus (strain CMCP6).